The chain runs to 197 residues: Probable nicotinate-nucleotide adenylyltransferase (197 aa).

This sequence belongs to the NadD family.

It carries out the reaction nicotinate beta-D-ribonucleotide + ATP + H(+) = deamido-NAD(+) + diphosphate. The protein operates within cofactor biosynthesis; NAD(+) biosynthesis; deamido-NAD(+) from nicotinate D-ribonucleotide: step 1/1. Functionally, catalyzes the reversible adenylation of nicotinate mononucleotide (NaMN) to nicotinic acid adenine dinucleotide (NaAD). The sequence is that of Probable nicotinate-nucleotide adenylyltransferase from Thermosipho melanesiensis (strain DSM 12029 / CIP 104789 / BI429).